The chain runs to 23 residues: Coenzyme PQQ synthesis protein A (23 aa).

The pyrroloquinoline quinone (Glu-Tyr) cross-link spans 15-19 (EVTLY).

This sequence belongs to the PqqA family.

It participates in cofactor biosynthesis; pyrroloquinoline quinone biosynthesis. Functionally, required for coenzyme pyrroloquinoline quinone (PQQ) biosynthesis. PQQ is probably formed by cross-linking a specific glutamate to a specific tyrosine residue and excising these residues from the peptide. In Pseudomonas aeruginosa (strain UCBPP-PA14), this protein is Coenzyme PQQ synthesis protein A.